The chain runs to 154 residues: Ribosome maturation factor RimP (154 aa).

This sequence belongs to the RimP family.

Its subcellular location is the cytoplasm. Required for maturation of 30S ribosomal subunits. This Flavobacterium psychrophilum (strain ATCC 49511 / DSM 21280 / CIP 103535 / JIP02/86) protein is Ribosome maturation factor RimP.